The following is a 246-amino-acid chain: uncharacterized protein (246 aa).

2 disordered regions span residues 9 to 125 (CSRV…GAMA) and 155 to 203 (QPVR…EEKA). Over residues 27–37 (GTRRQRQRPRQ) the composition is skewed to basic residues. Pro residues-rich tracts occupy residues 54–64 (PRPPTGPPARY) and 101–117 (EPRPPPESPGAPPPPGS). Positions 161-176 (KLPKGKGRLRRPRQSR) are enriched in basic residues. Thr-179 is modified (phosphothreonine). Phosphoserine occurs at positions 196, 210, and 220.

The protein resides in the cytoplasm. This is an uncharacterized protein from Mus musculus (Mouse).